The sequence spans 350 residues: Melatonin receptor type 1A (350 aa).

Topologically, residues 1–29 are extracellular; sequence MQGNGSALPNASQPVLRGDGARPSWLASA. N-linked (GlcNAc...) asparagine glycosylation is found at N4 and N10. A helical membrane pass occupies residues 30–50; sequence LACVLIFTIVVDILGNLLVIL. At 51–63 the chain is on the cytoplasmic side; it reads SVYRNKKLRNAGN. Residues 64–84 traverse the membrane as a helical segment; that stretch reads IFVVSLAVADLVVAIYPYPLV. Over 85-102 the chain is Extracellular; that stretch reads LMSIFNNGWNLGYLHCQV. A disulfide bond links C100 and C177. Residues 103–123 form a helical membrane-spanning segment; sequence SGFLMGLSVIGSIFNITGIAI. Residues 124 to 142 lie on the Cytoplasmic side of the membrane; it reads NRYCYICHSLKYDKLYSSK. Residues 143–163 form a helical membrane-spanning segment; it reads NSLCYVLLIWLLTLAAVLPNL. 2 residues coordinate melatonin: N162 and Q181. Over 164–187 the chain is Extracellular; the sequence is RAGTLQYDPRIYSCTFAQSVSSAY. A helical transmembrane segment spans residues 188–208; it reads TIAVVVFHFLVPMIIVIFCYL. Residues 209–240 lie on the Cytoplasmic side of the membrane; that stretch reads RIWILVLQVRQRVKPDRKPKLKPQDFRNFVTM. Residues 241–261 traverse the membrane as a helical segment; that stretch reads FVVFVLFAICWAPLNFIGLAV. Residues 262-274 are Extracellular-facing; that stretch reads ASDPASMVPRIPE. The chain crosses the membrane as a helical span at residues 275–295; sequence WLFVASYYMAYFNSCLNAIIY. The Cytoplasmic portion of the chain corresponds to 296 to 350; that stretch reads GLLNQNFRKEYRRIIVSLCTARVFFVDSSNDVADRVKWKPSPLMTNNNVVKVDSV.

The protein belongs to the G-protein coupled receptor 1 family. Expressed in hypophyseal pars tuberalis and hypothalamic suprachiasmatic nuclei (SCN). Hippocampus.

It localises to the cell membrane. Functionally, high affinity receptor for melatonin. Likely to mediate the reproductive and circadian actions of melatonin. The activity of this receptor is mediated by pertussis toxin sensitive G proteins that inhibit adenylate cyclase activity. Possibly involved in sleep induction, by melatonin activation of the potassium channel KCNMA1/BK and the dissociation of G-beta and G-gamma subunits, thereby decreasing synaptic transmission. In Homo sapiens (Human), this protein is Melatonin receptor type 1A (MTNR1A).